Reading from the N-terminus, the 384-residue chain is Stress response protein bis1 (384 aa).

Disordered stretches follow at residues 1 to 22 (MSLAKKIDDDEKQLVKPVNKEQ) and 344 to 384 (SPLH…PKRV).

This sequence belongs to the ESS2 family. As to quaternary structure, heterodimer with ish1.

The protein localises to the nucleus. Its subcellular location is the cytoplasm. It is found in the cytoskeleton. The protein resides in the spindle. Has a role in maintaining cell viability during stationary phase induced by stress response. May be involved in pre-mRNA splicing. The sequence is that of Stress response protein bis1 (bis1) from Schizosaccharomyces pombe (strain 972 / ATCC 24843) (Fission yeast).